The primary structure comprises 93 residues: Small ribosomal subunit protein uS19 (93 aa).

It belongs to the universal ribosomal protein uS19 family.

Functionally, protein S19 forms a complex with S13 that binds strongly to the 16S ribosomal RNA. The protein is Small ribosomal subunit protein uS19 of Leptospira interrogans serogroup Icterohaemorrhagiae serovar copenhageni (strain Fiocruz L1-130).